We begin with the raw amino-acid sequence, 166 residues long: Phosphopantetheine adenylyltransferase (166 aa).

S9 contacts substrate. ATP contacts are provided by residues S9–F10 and H17. Residues K41, L74, and K88 each contribute to the substrate site. ATP-binding positions include G89–R91, E99, and Y123–T129.

Belongs to the bacterial CoaD family. Homohexamer. Mg(2+) is required as a cofactor.

The protein localises to the cytoplasm. The catalysed reaction is (R)-4'-phosphopantetheine + ATP + H(+) = 3'-dephospho-CoA + diphosphate. It participates in cofactor biosynthesis; coenzyme A biosynthesis; CoA from (R)-pantothenate: step 4/5. Functionally, reversibly transfers an adenylyl group from ATP to 4'-phosphopantetheine, yielding dephospho-CoA (dPCoA) and pyrophosphate. The sequence is that of Phosphopantetheine adenylyltransferase from Paenarthrobacter aurescens (strain TC1).